We begin with the raw amino-acid sequence, 398 residues long: S-adenosylmethionine synthase (398 aa).

Histidine 16 lines the ATP pocket. A Mg(2+)-binding site is contributed by aspartate 18. Glutamate 44 contacts K(+). The L-methionine site is built by glutamate 57 and glutamine 100. Residues 100–110 (QSPDIAQGVNE) form a flexible loop region. ATP contacts are provided by residues 175-177 (DAK), 242-243 (RF), aspartate 251, 257-258 (RK), alanine 274, and lysine 278. An L-methionine-binding site is contributed by aspartate 251. Residue lysine 282 coordinates L-methionine.

It belongs to the AdoMet synthase family. Homotetramer; dimer of dimers. The cofactor is Mg(2+). It depends on K(+) as a cofactor.

It is found in the cytoplasm. It catalyses the reaction L-methionine + ATP + H2O = S-adenosyl-L-methionine + phosphate + diphosphate. It functions in the pathway amino-acid biosynthesis; S-adenosyl-L-methionine biosynthesis; S-adenosyl-L-methionine from L-methionine: step 1/1. Functionally, catalyzes the formation of S-adenosylmethionine (AdoMet) from methionine and ATP. The overall synthetic reaction is composed of two sequential steps, AdoMet formation and the subsequent tripolyphosphate hydrolysis which occurs prior to release of AdoMet from the enzyme. In Streptococcus agalactiae serotype Ia (strain ATCC 27591 / A909 / CDC SS700), this protein is S-adenosylmethionine synthase.